We begin with the raw amino-acid sequence, 418 residues long: MLMFQKPKGTRDFLPEEMKKRKNIEKKLRKVFDSYNFSEINTPTFESFELLSKKTGEEIRKQLFVFKDHGDREMGLRPELTSSVARFYINEFKNTPKPVKLYYFTNCFRYENPQAGRYREFWQMGSELIGSKKPIADAEVINLAIEGLKEINMDFEINIGHLGVLKGVFEKYDLSDDEGNEIRRLIDKEDMDGLKTALSRIESEKNIEISEKVFEVLELKGGREVISKLKEKLSEFESSVTALENLDSILEFVPHEYIINFGIARGLDYYTGMVFEIYGKREGARQVCGGGRYDNLIELFEGEPSPAVGFAYGFDRIMLNIDDFEVEEESIFVVPVKSSDMLLNECLKIAKTLRDAGKAVELDLMGRKLNKALNYANTKGIKKVLIVGENDILEGKVALKNMETGEQSLIELKDILTI.

This sequence belongs to the class-II aminoacyl-tRNA synthetase family.

The protein resides in the cytoplasm. It carries out the reaction tRNA(His) + L-histidine + ATP = L-histidyl-tRNA(His) + AMP + diphosphate + H(+). The polypeptide is Histidine--tRNA ligase (Methanococcus maripaludis (strain C6 / ATCC BAA-1332)).